Here is a 421-residue protein sequence, read N- to C-terminus: Gamma-glutamyl phosphate reductase (421 aa).

Belongs to the gamma-glutamyl phosphate reductase family.

The protein resides in the cytoplasm. It catalyses the reaction L-glutamate 5-semialdehyde + phosphate + NADP(+) = L-glutamyl 5-phosphate + NADPH + H(+). The protein operates within amino-acid biosynthesis; L-proline biosynthesis; L-glutamate 5-semialdehyde from L-glutamate: step 2/2. Catalyzes the NADPH-dependent reduction of L-glutamate 5-phosphate into L-glutamate 5-semialdehyde and phosphate. The product spontaneously undergoes cyclization to form 1-pyrroline-5-carboxylate. The chain is Gamma-glutamyl phosphate reductase from Nocardia farcinica (strain IFM 10152).